The sequence spans 173 residues: NADH-ubiquinone oxidoreductase chain 6 (173 aa).

The next 5 helical transmembrane spans lie at 1–21 (MTYVMSLFLLGLVLGLVAVAS), 25–45 (PYFGALSLVGVAAFGCGVLIW), 53–73 (LVLFLIYLGGMLVVFAYSAAL), 82–102 (LGSWPVVSVYFGYFFFVFGIL), and 142–162 (GVLLLGAWVLLLTLLVVLELV).

Belongs to the complex I subunit 6 family.

Its subcellular location is the mitochondrion membrane. It carries out the reaction a ubiquinone + NADH + 5 H(+)(in) = a ubiquinol + NAD(+) + 4 H(+)(out). Core subunit of the mitochondrial membrane respiratory chain NADH dehydrogenase (Complex I) that is believed to belong to the minimal assembly required for catalysis. Complex I functions in the transfer of electrons from NADH to the respiratory chain. The immediate electron acceptor for the enzyme is believed to be ubiquinone. This Tetraodon nigroviridis (Spotted green pufferfish) protein is NADH-ubiquinone oxidoreductase chain 6 (MT-ND6).